A 133-amino-acid chain; its full sequence is Small ribosomal subunit protein uS8 (133 aa).

The protein belongs to the universal ribosomal protein uS8 family. Part of the 30S ribosomal subunit. Contacts proteins S5 and S12.

Its function is as follows. One of the primary rRNA binding proteins, it binds directly to 16S rRNA central domain where it helps coordinate assembly of the platform of the 30S subunit. This chain is Small ribosomal subunit protein uS8, found in Gloeobacter violaceus (strain ATCC 29082 / PCC 7421).